Reading from the N-terminus, the 271-residue chain is Cobalt import ATP-binding protein CbiO (271 aa).

Residues 2-236 (LATSDLWFRY…TEAMEHAGLT (235 aa)) enclose the ABC transporter domain. 34-41 (GANGCGKS) is an ATP binding site.

The protein belongs to the ABC transporter superfamily. Cobalt importer (TC 3.A.1.18.1) family. Forms an energy-coupling factor (ECF) transporter complex composed of an ATP-binding protein (A component, CbiO), a transmembrane protein (T component, CbiQ) and 2 possible substrate-capture proteins (S components, CbiM and CbiN) of unknown stoichimetry.

Its subcellular location is the cell inner membrane. It functions in the pathway cofactor biosynthesis; adenosylcobalamin biosynthesis. Its function is as follows. Part of the energy-coupling factor (ECF) transporter complex CbiMNOQ involved in cobalt import. Presumably responsible for energy coupling to the transport system. The polypeptide is Cobalt import ATP-binding protein CbiO (Salmonella typhi).